A 140-amino-acid chain; its full sequence is Small ribosomal subunit protein uS12 (140 aa).

Aspartate 102 is modified (3-methylthioaspartic acid).

The protein belongs to the universal ribosomal protein uS12 family. Part of the 30S ribosomal subunit. Contacts proteins S8 and S17. May interact with IF1 in the 30S initiation complex.

With S4 and S5 plays an important role in translational accuracy. In terms of biological role, interacts with and stabilizes bases of the 16S rRNA that are involved in tRNA selection in the A site and with the mRNA backbone. Located at the interface of the 30S and 50S subunits, it traverses the body of the 30S subunit contacting proteins on the other side and probably holding the rRNA structure together. The combined cluster of proteins S8, S12 and S17 appears to hold together the shoulder and platform of the 30S subunit. In Geobacillus stearothermophilus (Bacillus stearothermophilus), this protein is Small ribosomal subunit protein uS12.